A 282-amino-acid polypeptide reads, in one-letter code: Cuticle collagen 8 (282 aa).

An N-terminal signal peptide occupies residues 1 to 24 (MLVCVFVALYTMMGLLTDIKQLQS). The segment at 86-282 (GPKSEGCPAG…CPCPGRSYKA (197 aa)) is disordered. Triple-helical region regions lie at residues 95–124 (GPPG…PGVI) and 141–269 (GRPG…PGPD). Residues 170-180 (TGGQGGPGEQG) are compositionally biased toward gly residues. The span at 214-224 (PPGPRGPPGPE) shows a compositional bias: pro residues. The segment covering 225–234 (GNPGGAGEDG) has biased composition (gly residues). A compositionally biased stretch (low complexity) spans 235–244 (NQGPVGHPGV).

Belongs to the cuticular collagen family. As to quaternary structure, collagen polypeptide chains are complexed within the cuticle by disulfide bonds and other types of covalent cross-links.

In terms of biological role, nematode cuticles are composed largely of collagen-like proteins. The cuticle functions both as an exoskeleton and as a barrier to protect the worm from its environment. In Caenorhabditis elegans, this protein is Cuticle collagen 8 (col-8).